The primary structure comprises 394 residues: MTSYTDKGEKHARGRFLSFHHLTFWVGNAKQAASFYCDKFGFEPCAYKGLETGSRDVVSHAIKQDKIIFVFQSPLNPGNQEMGQHMIKHGDGVKDVAFQVEDCDFLFQKAKDHGAVVVREPWIEEDEGGKVKYAVLQTYGDTTHTLLEYLGPYRGVFLPGYKEPLFRDPLLPTLPSGCLSFIDHIVGNQPDNEMVPIVEWYQKCLLFHRFWSVDDKQIHTEYSSLRSIVVTNYEETIKMPINEPAAGKKKSQIQEYVDYYGSAGVQHIALNTSNIIKAVKNLKSRGIEFLSAPDTYYEELRKKLKTAKITVKEDLNVLQELKILVDYDDKGYLLQIFTKPMQDRPTLFLEVIQRYNHFGFGAGNFKSLFEAIETDQDARGNLTIYAANGEHQVL.

2 VOC domains span residues 18 to 149 (SFHH…LLEY) and 181 to 339 (FIDH…IFTK). Fe cation-binding residues include histidine 184, histidine 267, and glutamate 350.

The protein belongs to the 4HPPD family. As to quaternary structure, homodimer. Fe cation serves as cofactor.

Its subcellular location is the cytoplasm. The protein resides in the endoplasmic reticulum membrane. It is found in the golgi apparatus membrane. It carries out the reaction 3-(4-hydroxyphenyl)pyruvate + O2 = homogentisate + CO2. Its pathway is amino-acid degradation; L-phenylalanine degradation; acetoacetate and fumarate from L-phenylalanine: step 3/6. Its function is as follows. Catalyzes the conversion of 4-hydroxyphenylpyruvic acid to homogentisic acid, one of the steps in tyrosine catabolism. This chain is 4-hydroxyphenylpyruvate dioxygenase (hpd), found in Xenopus tropicalis (Western clawed frog).